A 116-amino-acid chain; its full sequence is Large ribosomal subunit protein uL22 (116 aa).

The protein belongs to the universal ribosomal protein uL22 family. As to quaternary structure, part of the 50S ribosomal subunit.

This protein binds specifically to 23S rRNA; its binding is stimulated by other ribosomal proteins, e.g. L4, L17, and L20. It is important during the early stages of 50S assembly. It makes multiple contacts with different domains of the 23S rRNA in the assembled 50S subunit and ribosome. Functionally, the globular domain of the protein is located near the polypeptide exit tunnel on the outside of the subunit, while an extended beta-hairpin is found that lines the wall of the exit tunnel in the center of the 70S ribosome. In Leptospira biflexa serovar Patoc (strain Patoc 1 / Ames), this protein is Large ribosomal subunit protein uL22.